A 248-amino-acid chain; its full sequence is Functional amyloid sbunit FapE (248 aa).

The signal sequence occupies residues Met1 to Ala20.

This sequence belongs to the FapE family. In terms of assembly, a minor component of purified amyloid fibrils. Fibrils are resistant to boiling in 2% (weight/vol) SDS and require &gt;90% (vol/vol) formic acid to dissolve.

The protein resides in the fimbrium. The protein localises to the secreted. Its function is as follows. A minor component of the functional amyloid in this bacterium. Upon overexpression of the endogenous six-gene locus (fapA-fapF) in situ, cells form large clumps during liquid growth, make large amounts of biofilm and produce amyloid fibrils. Expression of the 6 gene operon in E.coli strain BL21(DE3) induces flocculation and biofilm formation with copious extracellular fibrils. The sequence is that of Functional amyloid sbunit FapE from Pseudomonas fluorescens.